Consider the following 413-residue polypeptide: MASPAIGQRPYPLLLDPEPPRYLQSLGGTEPPPPARPRRCIPTALIPAAGASEDRGGRRSGRRDPEPTPRDCRHARPVRPGLQPRLRLRPGSHRPRDVRSIFEQPQDPRVLAERGEGHRFVELALRGGPGWCDLCGREVLRQALRCANCKFTCHSECRSLIQLDCRQKGGPALDRRSPESTLTPTLNQNVCKAVEETQHPPTIQEIKQKIDSYNSREKHCLGMKLSEDGTYTGFIKVHLKLRRPVTVPAGIRPQSIYDAIKEVNPAATTDKRTSFYLPLDAIKQLHISSTTTVSEVIQGLLKKFMVVDNPQKFALFKRIHKDGQVLFQKLSIADYPLYLRLLAGPDTDVLSFVLKENETGEVEWDAFSIPELQNFLTILEKEEQDKIHQLQKKYNKFRQKLEEALRESQGKPG.

The segment at 1-103 is disordered; the sequence is MASPAIGQRP…RPRDVRSIFE (103 aa). Basic and acidic residues predominate over residues 52–74; it reads SEDRGGRRSGRRDPEPTPRDCRH. The segment at 117 to 165 adopts a Phorbol-ester/DAG-type zinc-finger fold; the sequence is GHRFVELALRGGPGWCDLCGREVLRQALRCANCKFTCHSECRSLIQLDC. Residues S177 and S274 each carry the phosphoserine modification. Residues 265–359 form the Ras-associating domain; it reads PAATTDKRTS…LSFVLKENET (95 aa). T347 carries the phosphothreonine modification. The SARAH domain maps to 361–408; that stretch reads EVEWDAFSIPELQNFLTILEKEEQDKIHQLQKKYNKFRQKLEEALRES.

As to quaternary structure, interacts directly with activated HRAS; a RASSF5-STK4/MST1 complex probably associates with activated HRAS. Interacts with KRAS. Probably interacts with Ras-like GTPases RRAS, MRAS, RAP1B, RAP2A and RALA. Interacts with RRAS2. Can self-associate. Interacts with RSSF1 isoform A. The RSSF1 isoform A-RSSF5 heterodimer probably mediates the association of RSSF1 with HRAS. Isoform 2 interacts with activated RAP1A and ITGAL/LFA-1. Binds STK4/MST1, inhibiting STK4/MST1 autoactivation.

The protein localises to the cytoplasm. The protein resides in the cytoskeleton. In terms of biological role, potential tumor suppressor. Seems to be involved in lymphocyte adhesion by linking RAP1A activation upon T-cell receptor or chemokine stimulation to integrin activation. Isoform 2 stimulates lymphocyte polarization and the patch-like distribution of ITGAL/LFA-1, resulting in an enhanced adhesion to ICAM1. Together with RAP1A may participate in regulation of microtubule growth. The association of isoform 2 with activated RAP1A is required for directional movement of endothelial cells during wound healing. May be involved in regulation of Ras apoptotic function. The RASSF5-STK4/MST1 complex may mediate HRAS and KRAS induced apoptosis. This Mus musculus (Mouse) protein is Ras association domain-containing protein 5 (Rassf5).